The sequence spans 1000 residues: Sop-2-related protein 1 (1000 aa).

Disordered stretches follow at residues 355–374 (KIMK…QYQQ), 379–422 (HQQH…GPSE), and 466–509 (APSE…VARG). Low complexity predominate over residues 390–404 (SSSSVPSTSSPSCSS). Residues 406 to 415 (ANRKEMETVR) are compositionally biased toward basic and acidic residues. Residues 489 to 502 (GPSQQQQIPGTSQQ) show a composition bias toward low complexity. Residues 633–720 (REQILPQQYM…LNTSSVQPSE (88 aa)) form an RNA-binding region. The interval 948–1000 (HRMHSQRPPSMGNSSTSSEASSTSPTNAATATSSPASNRPTTSTAQPPTLNPT) is disordered. Residues 960 to 992 (NSSTSSEASSTSPTNAATATSSPASNRPTTSTA) show a composition bias toward low complexity.

Binds through its N-terminal region to the N-terminal region of sop-2.

Its subcellular location is the nucleus. Functionally, acts synergistically with sop-2 to maintain the transcriptionally repressive state of homeotic genes throughout development. Not required to initiate repression, but to maintain it during later stages of development. Also required to repress expression of other genes. Binds RNA in a sequence-independent manner. This is Sop-2-related protein 1 (sor-1) from Caenorhabditis elegans.